A 242-amino-acid chain; its full sequence is Biosynthetic peptidoglycan transglycosylase (242 aa).

A helical transmembrane segment spans residues 19–39 (LLLACAVLWGGGVALFSIVPV).

It belongs to the glycosyltransferase 51 family.

Its subcellular location is the cell inner membrane. The catalysed reaction is [GlcNAc-(1-&gt;4)-Mur2Ac(oyl-L-Ala-gamma-D-Glu-L-Lys-D-Ala-D-Ala)](n)-di-trans,octa-cis-undecaprenyl diphosphate + beta-D-GlcNAc-(1-&gt;4)-Mur2Ac(oyl-L-Ala-gamma-D-Glu-L-Lys-D-Ala-D-Ala)-di-trans,octa-cis-undecaprenyl diphosphate = [GlcNAc-(1-&gt;4)-Mur2Ac(oyl-L-Ala-gamma-D-Glu-L-Lys-D-Ala-D-Ala)](n+1)-di-trans,octa-cis-undecaprenyl diphosphate + di-trans,octa-cis-undecaprenyl diphosphate + H(+). Its pathway is cell wall biogenesis; peptidoglycan biosynthesis. Its function is as follows. Peptidoglycan polymerase that catalyzes glycan chain elongation from lipid-linked precursors. The protein is Biosynthetic peptidoglycan transglycosylase of Klebsiella oxytoca.